Consider the following 66-residue polypeptide: Sarcoplasmic/endoplasmic reticulum calcium ATPase regulator ARLN (66 aa).

Met-1 carries the post-translational modification N-acetylmethionine. Positions 1 to 37 are disordered; that stretch reads MEVDAPGVDGRDGLRERRGFSEGGRQNFDVRPQSGAN. Positions 9–20 are enriched in basic and acidic residues; sequence DGRDGLRERRGF. A helical transmembrane segment spans residues 45–65; that stretch reads WLDLWLFILFDVVVFLFVYFL.

As to quaternary structure, homooligomer. Can also form heterooligomers with other sarcoplasmic/endoplasmic reticulum calcium ATPase (SERCA) regulators ERLN, PLN, SLN and STRIT1/DWORF. Monomer. Interacts as a monomer with ATP2A2/SERCA2; the interaction results in inhibition of ATP2A2 Ca(2+) affinity.

Its subcellular location is the endoplasmic reticulum membrane. Inhibits the activity of the calcium ATPases ATP2A2/SERCA2 and ATP2A3/SERCA3 by decreasing their apparent affinity for Ca(2+). The protein is Sarcoplasmic/endoplasmic reticulum calcium ATPase regulator ARLN of Homo sapiens (Human).